Consider the following 508-residue polypeptide: Hydroxymethylglutaryl-CoA synthase, mitochondrial (508 aa).

Residues 1 to 37 (MQRLLAPARRVLQVKRAMQETSLTPAHLLSAAQQRFS) constitute a mitochondrion transit peptide. N6-succinyllysine is present on lysine 52. Residues glutamate 80 and alanine 81 each contribute to the (3S)-3-hydroxy-3-methylglutaryl-CoA site. 2 positions are modified to N6-acetyllysine; alternate: lysine 83 and lysine 118. Lysine 83 and lysine 118 each carry N6-succinyllysine; alternate. The Proton donor/acceptor role is filled by glutamate 132. The (3S)-3-hydroxy-3-methylglutaryl-CoA site is built by cysteine 166, asparagine 204, and threonine 208. The active-site Acyl-thioester intermediate is the cysteine 166. At lysine 221 the chain carries N6-succinyllysine. An N6-acetyllysine modification is found at lysine 243. At lysine 256 the chain carries N6-acetyllysine; alternate. Lysine 256 carries the post-translational modification N6-succinyllysine; alternate. (3S)-3-hydroxy-3-methylglutaryl-CoA-binding residues include serine 258 and histidine 301. Catalysis depends on histidine 301, which acts as the Proton donor/acceptor. Lysine 306 is modified (N6-acetyllysine). Lysine 310 is a binding site for (3S)-3-hydroxy-3-methylglutaryl-CoA. Residues lysine 310 and lysine 327 each carry the N6-acetyllysine; alternate modification. 2 positions are modified to N6-succinyllysine; alternate: lysine 310 and lysine 327. N6-succinyllysine is present on lysine 333. 4 positions are modified to N6-acetyllysine; alternate: lysine 342, lysine 350, lysine 354, and lysine 358. 4 positions are modified to N6-succinyllysine; alternate: lysine 342, lysine 350, lysine 354, and lysine 358. (3S)-3-hydroxy-3-methylglutaryl-CoA contacts are provided by asparagine 380 and serine 414. N6-acetyllysine is present on lysine 427. Residue serine 433 is modified to Phosphoserine. Lysine 437 is modified (N6-acetyllysine). Position 440 is a phosphoserine (serine 440). The residue at position 447 (lysine 447) is an N6-acetyllysine; alternate. Residue lysine 447 is modified to N6-succinyllysine; alternate. Serine 456 is modified (phosphoserine). Lysine 473 is subject to N6-acetyllysine; alternate. Lysine 473 is subject to N6-succinyllysine; alternate. Serine 477 is subject to Phosphoserine.

This sequence belongs to the thiolase-like superfamily. HMG-CoA synthase family. In terms of assembly, homodimer. Acetylation of Lys-427 is observed in liver mitochondria from fasted mice but not from fed mice. Post-translationally, succinylated. Desuccinylated by SIRT5. Succinylation, at least at Lys-83 and Lys-310, inhibits the enzymatic activity. As to expression, liver and kidney.

It localises to the mitochondrion. It catalyses the reaction acetoacetyl-CoA + acetyl-CoA + H2O = (3S)-3-hydroxy-3-methylglutaryl-CoA + CoA + H(+). It functions in the pathway metabolic intermediate biosynthesis; (R)-mevalonate biosynthesis; (R)-mevalonate from acetyl-CoA: step 2/3. Catalyzes the first irreversible step in ketogenesis, condensing acetyl-CoA to acetoacetyl-CoA to form HMG-CoA, which is converted by HMG-CoA reductase (HMGCR) into mevalonate. The sequence is that of Hydroxymethylglutaryl-CoA synthase, mitochondrial (Hmgcs2) from Mus musculus (Mouse).